Here is a 169-residue protein sequence, read N- to C-terminus: Glycine-rich RNA-binding protein GRP2A (169 aa).

Positions 8-86 constitute an RRM domain; that stretch reads YRCFVGGLAW…RSITVNEAQS (79 aa). Disordered stretches follow at residues 69–100 and 125–169; these read MNGQ…GGGG and YSGG…GGGW. Positions 89–100 are enriched in gly residues; sequence SGAGGGGRGGGG.

In terms of tissue distribution, predominantly expressed in meristematic and growing tissue.

The protein localises to the nucleus. In terms of biological role, may play a general role in circadian phenomena associated with meristematic tissue. This Sinapis alba (White mustard) protein is Glycine-rich RNA-binding protein GRP2A.